A 443-amino-acid polypeptide reads, in one-letter code: Thymidine phosphorylase (443 aa).

It belongs to the thymidine/pyrimidine-nucleoside phosphorylase family. Homodimer.

It carries out the reaction thymidine + phosphate = 2-deoxy-alpha-D-ribose 1-phosphate + thymine. It functions in the pathway pyrimidine metabolism; dTMP biosynthesis via salvage pathway; dTMP from thymine: step 1/2. The enzymes which catalyze the reversible phosphorolysis of pyrimidine nucleosides are involved in the degradation of these compounds and in their utilization as carbon and energy sources, or in the rescue of pyrimidine bases for nucleotide synthesis. The protein is Thymidine phosphorylase of Aeromonas hydrophila subsp. hydrophila (strain ATCC 7966 / DSM 30187 / BCRC 13018 / CCUG 14551 / JCM 1027 / KCTC 2358 / NCIMB 9240 / NCTC 8049).